The primary structure comprises 8515 residues: Nonribosomal peptide synthetase 8 (8515 aa).

2 adenylation regions span residues Arg-59 to Ser-736 and Ala-1163 to Glu-1705. Residues Arg-587–Asp-1159 form a condensation 1 region. The 77-residue stretch at Glu-615–Glu-691 folds into the Carrier 1 domain. Ser-652 carries the post-translational modification O-(pantetheine 4'-phosphoryl)serine. One can recognise a Carrier 2 domain in the interval Arg-1732–Ser-1808. Residue Ser-1769 is modified to O-(pantetheine 4'-phosphoryl)serine. The tract at residues Leu-1830–Leu-2273 is epimerase 1. A condensation 2 region spans residues Ser-2301–Leu-2709. The tract at residues Gln-2733–Pro-3266 is adenylation 3. The 77-residue stretch at Thr-3286 to Ser-3362 folds into the Carrier 3 domain. Ser-3323 carries the post-translational modification O-(pantetheine 4'-phosphoryl)serine. The segment at Ser-3406–Val-3819 is condensation 3. Positions Glu-3857 to Asp-3933 constitute a Carrier 4 domain. At Ser-3894 the chain carries O-(pantetheine 4'-phosphoryl)serine. An epimerase 2 region spans residues Leu-3953–Leu-4392. The interval Pro-4420–Ile-4823 is condensation 4. The segment at Trp-4837 to Phe-5363 is adenylation 4. Residues Pro-5385–Ile-5461 enclose the Carrier 5 domain. Ser-5422 is subject to O-(pantetheine 4'-phosphoryl)serine. The condensation 5 stretch occupies residues Ser-5508 to Ser-5923. Positions Glu-5941–Arg-6459 are adenylation 5. The Carrier 6 domain occupies Pro-6482–Ala-6558. Ser-6519 bears the O-(pantetheine 4'-phosphoryl)serine mark. Positions Cys-6606–Leu-6992 are condensation 6. An adenylation 6 region spans residues Val-7030–Val-7544. A Carrier 7 domain is found at Ile-7575–Ala-7651. Residue Ser-7612 is modified to O-(pantetheine 4'-phosphoryl)serine. Residues Leu-7670–Thr-8119 are epimerase 3. The condensation 7 stretch occupies residues His-8164–Asp-8504. Polar residues predominate over residues Ala-8488 to Leu-8500. Residues Ala-8488–Pro-8515 form a disordered region.

The protein belongs to the NRP synthetase family.

In terms of biological role, nonribosomal peptide synthesis (NRPS) is a key mechanism responsible for the biosynthesis of bioactive metabolites which are potentially contributing to organismal virulence. However, contarary to other nonribosomal peptide synthases, NRPS8 does not encode a secreted peptide, but has more a structural role since it is involved in germ tube formation. The sequence is that of Nonribosomal peptide synthetase 8 (NRPS8) from Aspergillus fumigatus (strain ATCC MYA-4609 / CBS 101355 / FGSC A1100 / Af293) (Neosartorya fumigata).